We begin with the raw amino-acid sequence, 189 residues long: Large ribosomal subunit protein bL17 (189 aa).

The interval 136-189 (KAAPAAEEEVVETEEAPAVEAEAAESEEAPAAEAEAAEAEAAETEEAPAAEDKK) is disordered. The segment covering 141–189 (AEEEVVETEEAPAVEAEAAESEEAPAAEAEAAEAEAAETEEAPAAEDKK) has biased composition (acidic residues).

This sequence belongs to the bacterial ribosomal protein bL17 family. As to quaternary structure, part of the 50S ribosomal subunit. Contacts protein L32.

This Paenarthrobacter aurescens (strain TC1) protein is Large ribosomal subunit protein bL17.